A 157-amino-acid polypeptide reads, in one-letter code: Ribosome maturation factor RimP (157 aa).

It belongs to the RimP family.

The protein resides in the cytoplasm. In terms of biological role, required for maturation of 30S ribosomal subunits. In Lactococcus lactis subsp. cremoris (strain MG1363), this protein is Ribosome maturation factor RimP.